The sequence spans 317 residues: MKAWQELTITVHREAEEAVSNLLIEAGSQGVAINDTADYIGQENRFGELYPAVEQSEMVTITAYYPNSADIDDIRQTINQGLSRLKQCDVELGELTLTNQELAEEDWADNWKAYYEPARITHDLTIVPSWTDYEATAGEKIIRLDPGMAFGTGTHPTTKLSLFALEQVLRGGETVIDVGTGSGVLSIASSLLGAKEVFAYDLDDVAVRVAKDNIALNQATDNIHVAAGDLLKGLTQEADVIVANILADILVHVTADAYRLVKDEGYLIMSGIISEKLDMVKQAALNAGFLLETHMLQGEWNALIFKKTDDLSGVIGG.

S-adenosyl-L-methionine-binding residues include Thr158, Gly179, Asp201, and Asn244.

It belongs to the methyltransferase superfamily. PrmA family.

The protein resides in the cytoplasm. The enzyme catalyses L-lysyl-[protein] + 3 S-adenosyl-L-methionine = N(6),N(6),N(6)-trimethyl-L-lysyl-[protein] + 3 S-adenosyl-L-homocysteine + 3 H(+). In terms of biological role, methylates ribosomal protein L11. The polypeptide is Ribosomal protein L11 methyltransferase (Streptococcus equi subsp. zooepidemicus (strain H70)).